The chain runs to 539 residues: uncharacterized protein (539 aa).

ABC transporter domains lie at 9–276 (LEVK…EFKK) and 288–536 (IKLE…QEMF). ATP contacts are provided by residues 41 to 48 (GKSGAGKS) and 325 to 332 (GTSGAGKT).

This sequence belongs to the ABC transporter superfamily.

This is an uncharacterized protein from Methanocaldococcus jannaschii (strain ATCC 43067 / DSM 2661 / JAL-1 / JCM 10045 / NBRC 100440) (Methanococcus jannaschii).